The chain runs to 148 residues: Probable TtuB-protein conjugate cleaving protease (148 aa).

The region spanning 22-148 is the MPN domain; that stretch reads HGLVLYVPRG…EGQEVALVVL (127 aa). The Proton donor/acceptor role is filled by Glu-47. Zn(2+)-binding residues include His-101, His-103, and Asp-114. A JAMM motif motif is present at residues 101–114; sequence HSHPKGPALPSPRD.

The protein belongs to the peptidase M67B family. Zn(2+) is required as a cofactor.

Functionally, probable metalloprotease that cleaves the ubiquitin-like modifier protein TtuB from protein conjugates, hydrolyzing the isopeptide bond between a lysine residue of the target protein and the C-terminal glycine of the modifier protein. Does not seem to work for all the TtuB conjugates. The chain is Probable TtuB-protein conjugate cleaving protease from Thermus thermophilus (strain ATCC BAA-163 / DSM 7039 / HB27).